Here is a 546-residue protein sequence, read N- to C-terminus: CTP synthase (546 aa).

Positions 1 to 266 (MTTRYIFVTG…DQLVTKRFGI (266 aa)) are amidoligase domain. Residue serine 14 participates in CTP binding. Serine 14 is a binding site for UTP. ATP-binding positions include 15–20 (SLGKGI) and aspartate 72. Mg(2+) is bound by residues aspartate 72 and glutamate 140. CTP contacts are provided by residues 147-149 (DIE), 187-192 (KTKPTQ), and lysine 223. UTP is bound by residues 187-192 (KTKPTQ) and lysine 223. 239 to 241 (KDV) contributes to the ATP binding site. Residues 291-542 (TIGMVGKYIE…VAAAAAYQKR (252 aa)) form the Glutamine amidotransferase type-1 domain. Glycine 352 serves as a coordination point for L-glutamine. Cysteine 379 serves as the catalytic Nucleophile; for glutamine hydrolysis. L-glutamine is bound by residues 380 to 383 (LGMQ), glutamate 403, and arginine 470. Active-site residues include histidine 515 and glutamate 517.

Belongs to the CTP synthase family. Homotetramer.

It carries out the reaction UTP + L-glutamine + ATP + H2O = CTP + L-glutamate + ADP + phosphate + 2 H(+). The catalysed reaction is L-glutamine + H2O = L-glutamate + NH4(+). It catalyses the reaction UTP + NH4(+) + ATP = CTP + ADP + phosphate + 2 H(+). The protein operates within pyrimidine metabolism; CTP biosynthesis via de novo pathway; CTP from UDP: step 2/2. Its activity is regulated as follows. Allosterically activated by GTP, when glutamine is the substrate; GTP has no effect on the reaction when ammonia is the substrate. The allosteric effector GTP functions by stabilizing the protein conformation that binds the tetrahedral intermediate(s) formed during glutamine hydrolysis. Inhibited by the product CTP, via allosteric rather than competitive inhibition. Its function is as follows. Catalyzes the ATP-dependent amination of UTP to CTP with either L-glutamine or ammonia as the source of nitrogen. Regulates intracellular CTP levels through interactions with the four ribonucleotide triphosphates. The chain is CTP synthase from Shewanella pealeana (strain ATCC 700345 / ANG-SQ1).